The following is a 192-amino-acid chain: Thymidine kinase (192 aa).

Residues 9 to 16 (GAMNSGKT) and 85 to 88 (DEAQ) each bind ATP. Glutamate 86 functions as the Proton acceptor in the catalytic mechanism. Residues cysteine 143, cysteine 146, cysteine 180, and histidine 183 each contribute to the Zn(2+) site.

This sequence belongs to the thymidine kinase family. Homotetramer.

The protein resides in the cytoplasm. It catalyses the reaction thymidine + ATP = dTMP + ADP + H(+). The protein is Thymidine kinase of Lactiplantibacillus plantarum (strain ATCC BAA-793 / NCIMB 8826 / WCFS1) (Lactobacillus plantarum).